The sequence spans 318 residues: Ubiquitin-like domain-containing CTD phosphatase 1 (318 aa).

N-acetylalanine is present on Ala-2. One can recognise a Ubiquitin-like domain in the interval 3 to 81 (LPIIVKWGGQ…IMMMGTREES (79 aa)). At Lys-117 the chain carries N6-acetyllysine. An FCP1 homology domain is found at 133–294 (PREGKKLLVL…LKLTQYLKEI (162 aa)). Residues Asp-143, Asp-145, and Asp-253 each coordinate Mg(2+).

Requires Mg(2+) as cofactor.

It localises to the nucleus. It catalyses the reaction O-phospho-L-seryl-[protein] + H2O = L-seryl-[protein] + phosphate. The catalysed reaction is O-phospho-L-threonyl-[protein] + H2O = L-threonyl-[protein] + phosphate. Functionally, dephosphorylates 26S nuclear proteasomes, thereby decreasing their proteolytic activity. Recruited to the 19S regulatory particle of the 26S proteasome through its interaction with 19S component PSMD2/RPN1. Once recruited, dephosphorylates 19S component PSMC2/RPT1 which impairs PSMC2 ATPase activity and disrupts 26S proteasome assembly. Has also been reported to stimulate the proteolytic activity of the 26S proteasome. This chain is Ubiquitin-like domain-containing CTD phosphatase 1 (UBLCP1), found in Bos taurus (Bovine).